The following is a 140-amino-acid chain: Putative pre-16S rRNA nuclease (140 aa).

Belongs to the YqgF nuclease family.

The protein resides in the cytoplasm. Could be a nuclease involved in processing of the 5'-end of pre-16S rRNA. This Mycoplasma pneumoniae (strain ATCC 29342 / M129 / Subtype 1) (Mycoplasmoides pneumoniae) protein is Putative pre-16S rRNA nuclease.